The primary structure comprises 294 residues: Potassium-transporting ATPase subunit beta (294 aa).

Residues 1–36 lie on the Cytoplasmic side of the membrane; that stretch reads MAALQEKKSCSQRMAEFRHYCWNPDTGQMLGRTPAR. The chain crosses the membrane as a helical; Signal-anchor for type II membrane protein span at residues 37–57; that stretch reads WVWISLYYAGFYVVMTGLFAL. Topologically, residues 58–294 are extracellular; it reads CIYVLMQTID…KVEFKLTIQK (237 aa). 5 N-linked (GlcNAc...) asparagine glycosylation sites follow: Asn99, Asn103, Asn130, Asn146, and Asn161. Cys131 and Cys152 form a disulfide bridge. Cys162 and Cys178 form a disulfide bridge. N-linked (GlcNAc...) asparagine glycans are attached at residues Asn193 and Asn225. The tract at residues 194-294 is immunoglobulin-like; sequence NTAPRVDCTF…KVEFKLTIQK (101 aa). A disulfide bridge links Cys201 with Cys266.

Belongs to the X(+)/potassium ATPases subunit beta family. As to quaternary structure, the ATPase pump is composed of two subunits: alpha (catalytic) and beta (regulatory). Interacts with alpha subunit ATP12A; this interaction is required for the formation of a functionally active pump and targeting at the plasma membrane. Interacts (via N-terminus) with alpha subunit ATP4A (via the P-domain). Post-translationally, N-glycosylation is necessary for assembly and functional expression of the pump at the plasma membrane. As to expression, expressed in parietal cells (at protein level).

The protein resides in the apical cell membrane. Its subcellular location is the cell membrane. Its function is as follows. The beta subunit of the gastric H(+)/K(+) ATPase pump which transports H(+) ions in exchange for K(+) ions across the apical membrane of parietal cells. Plays a structural and regulatory role in the assembly and membrane targeting of a functionally active pump. Within a transport cycle, the transfer of a H(+) ion across the membrane is coupled to ATP hydrolysis and is associated with a transient phosphorylation of the alpha subunit that shifts the pump conformation from inward-facing (E1) to outward-facing state (E2). Interacts with the phosphorylation domain of the alpha subunit and functions as a ratchet, stabilizing the lumenal-open E2 conformation and preventing the reverse reaction of the transport cycle. The chain is Potassium-transporting ATPase subunit beta (Atp4b) from Mus musculus (Mouse).